The sequence spans 293 residues: Bifunctional protein FolD (293 aa).

NADP(+) is bound by residues 166 to 168 (GRS), serine 191, and isoleucine 232.

Belongs to the tetrahydrofolate dehydrogenase/cyclohydrolase family. Homodimer.

The catalysed reaction is (6R)-5,10-methylene-5,6,7,8-tetrahydrofolate + NADP(+) = (6R)-5,10-methenyltetrahydrofolate + NADPH. It carries out the reaction (6R)-5,10-methenyltetrahydrofolate + H2O = (6R)-10-formyltetrahydrofolate + H(+). Its pathway is one-carbon metabolism; tetrahydrofolate interconversion. Catalyzes the oxidation of 5,10-methylenetetrahydrofolate to 5,10-methenyltetrahydrofolate and then the hydrolysis of 5,10-methenyltetrahydrofolate to 10-formyltetrahydrofolate. This chain is Bifunctional protein FolD, found in Synechococcus sp. (strain JA-2-3B'a(2-13)) (Cyanobacteria bacterium Yellowstone B-Prime).